Here is a 717-residue protein sequence, read N- to C-terminus: Coupling protein TraD (717 aa).

At methionine 1–asparagine 27 the chain is on the cytoplasmic side. The chain crosses the membrane as a helical span at residues isoleucine 28–isoleucine 47. The Periplasmic portion of the chain corresponds to lysine 48 to cysteine 104. Residues serine 105 to valine 130 traverse the membrane as a helical segment. Residues serine 131 to phenylalanine 717 are Cytoplasmic-facing. An ATP-binding site is contributed by glycine 192–serine 199. Disordered stretches follow at residues glutamate 614–valine 639 and leucine 650–serine 669.

This sequence belongs to the TrwB coupling protein family. As to quaternary structure, interacts with relaxosome component TraM. May form a hexamer in the membrane.

It is found in the cell inner membrane. Conjugative DNA transfer (CDT) is the unidirectional transfer of ssDNA plasmid from a donor to a recipient cell. It is the central mechanism by which antibiotic resistance and virulence factors are propagated in bacterial populations. Couples the transferosome to a type IV secretion system. Probably forms a pore through which single-stranded plasmid DNA is transferred to the secretion system. The last 37 residues are important for determining plasmid specificity and transfer efficiency, with additional specificity conferred by the TraD-TraM pair. This Escherichia coli (strain K12) protein is Coupling protein TraD (traD).